The primary structure comprises 478 residues: DNA gyrase subunit B (478 aa).

Positions Cys319–Pro438 constitute a Toprim domain. 3 residues coordinate Mg(2+): Glu325, Asp403, and Asp405.

It belongs to the type II topoisomerase GyrB family. As to quaternary structure, heterotetramer, composed of two GyrA and two GyrB chains. In the heterotetramer, GyrA contains the active site tyrosine that forms a transient covalent intermediate with DNA, while GyrB binds cofactors and catalyzes ATP hydrolysis. It depends on Mg(2+) as a cofactor. The cofactor is Mn(2+). Requires Ca(2+) as cofactor.

It localises to the cytoplasm. It catalyses the reaction ATP-dependent breakage, passage and rejoining of double-stranded DNA.. Functionally, a type II topoisomerase that negatively supercoils closed circular double-stranded (ds) DNA in an ATP-dependent manner to modulate DNA topology and maintain chromosomes in an underwound state. Negative supercoiling favors strand separation, and DNA replication, transcription, recombination and repair, all of which involve strand separation. Also able to catalyze the interconversion of other topological isomers of dsDNA rings, including catenanes and knotted rings. Type II topoisomerases break and join 2 DNA strands simultaneously in an ATP-dependent manner. This Cytophaga hutchinsonii protein is DNA gyrase subunit B (gyrB).